Consider the following 124-residue polypeptide: Small ribosomal subunit protein uS12 (124 aa).

Position 90 is a 3-methylthioaspartic acid (Asp90).

Belongs to the universal ribosomal protein uS12 family. Part of the 30S ribosomal subunit. Contacts proteins S8 and S17. May interact with IF1 in the 30S initiation complex.

In terms of biological role, with S4 and S5 plays an important role in translational accuracy. Its function is as follows. Interacts with and stabilizes bases of the 16S rRNA that are involved in tRNA selection in the A site and with the mRNA backbone. Located at the interface of the 30S and 50S subunits, it traverses the body of the 30S subunit contacting proteins on the other side and probably holding the rRNA structure together. The combined cluster of proteins S8, S12 and S17 appears to hold together the shoulder and platform of the 30S subunit. The protein is Small ribosomal subunit protein uS12 of Wolbachia pipientis subsp. Culex pipiens (strain wPip).